The following is a 152-amino-acid chain: Glutaredoxin-related protein 5, mitochondrial (152 aa).

Residues 1-31 (MSASLSRAAAALLRWGRSAGGGGLPGAGVRA) constitute a mitochondrion transit peptide. Residues 38 to 141 (AEQLDALVKK…EELKKLGIRS (104 aa)) form the Glutaredoxin domain. Lys55 lines the glutathione pocket. An N6-succinyllysine modification is found at Lys55. Cys63 is a [2Fe-2S] cluster binding site. Glutathione-binding positions include 93–97 (RQGIK), Ile105, and 118–119 (CD). A Phosphoserine modification is found at Ser151.

Belongs to the glutaredoxin family. Monothiol subfamily. In terms of assembly, homodimer. Interacts with ISCU. Interacts with BOLA1. Detected in bone, liver, muscle and kidney.

It is found in the mitochondrion matrix. Its function is as follows. Monothiol glutaredoxin involved in mitochondrial iron-sulfur (Fe/S) cluster transfer. Receives 2Fe/2S clusters from scaffold protein ISCU and mediates their transfer to apoproteins, to the 4Fe/FS cluster biosynthesis machinery, or export from mitochondrion. Required for normal regulation of hemoglobin synthesis by the iron-sulfur protein ACO1. The chain is Glutaredoxin-related protein 5, mitochondrial (Glrx5) from Mus musculus (Mouse).